The sequence spans 875 residues: MTDIDVRLREDVHVLGELLGETIRQQHGDAFLQKIEDIRHSAKADRRGPGEQLSSTLADLAEEDLLPVARAFNQFLNLANMAEQYQLIRRRDADQPEPFEAQVLPELLGRLKQAGHSNDALARQLAKLDIQLVLTAHPTEVARRTLIQKYDAIAGQLAAQDHRDLTPAERQQVRERLRRLIAEAWHTEEIRRTRPTPVDEAKWGFAVIEHSLWHAIPSHLRKVDKALLEATGLRLPLEAAPIRFASWMGGDRDGNPNVTAAVTREVLLLARWMAADLFLRDIDALAAELSMQQANDTLRKQVGDSAEPYRAVLKQLRDRLRATRAWAHSALTSNQPAGADVLVDNRELIAPLELCYQSLHECGMGVIAEGPLLDCLRRAVTFGLFLGRLDVRQDAARHRDALTEITDYLGLGRYADWDEEQRIAFLQAELKNRRPLLPAHFKPQADTAEVLATCREVAAAPAASLGSYVISMAGAASDVLAVQLLLKEAGLTRPMRVVPLFETLADLDNAGPVMQRLLGLPGYRAGLRGPQEVMIGYSDSAKDAGTTAAAWAQYRAQENLVRICAEHQVELLLFHGRGGTVGRGGGPAHAAILSQPPGSVAGRFRTTEQGEMIRFKFGLPGIAEQNLNLYLAAVLEATLLPPPPPQPAWREVMDQLAADGVQAYRSVVRENPDFVEYFRQSTPEQELGRLPLGSRPAKRRAGGIESLRAIPWIFGWTQTRLMLPAWLGWETALTNALARGQGELLAQMREQWPFFRTRIDMLEMVLAKADAQIAEAYDERLVQPHLRPLGAHLRDLLSQSCQVVLGLTGQPVLLAHSPETLEFISLRNTYLDPLHRLQAELLARSRSREAALDSPLEQALLVTVAGIAAGLRNTG.

Residues H137 and K542 contribute to the active site.

This sequence belongs to the PEPCase type 1 family. It depends on Mg(2+) as a cofactor.

The catalysed reaction is oxaloacetate + phosphate = phosphoenolpyruvate + hydrogencarbonate. Its function is as follows. Forms oxaloacetate, a four-carbon dicarboxylic acid source for the tricarboxylic acid cycle. The protein is Phosphoenolpyruvate carboxylase of Pseudomonas putida (strain ATCC 47054 / DSM 6125 / CFBP 8728 / NCIMB 11950 / KT2440).